Here is a 195-residue protein sequence, read N- to C-terminus: MMAIRELKVCLLGDTGVGKSSIVCRFVQDHFDHNISPTIGASFMTKTVPCGNELHKFLIWDTAGQERFHSLAPMYYRGSAAAVIVYDITKQDSFHTLKKWVKELKEHGPENIVMAIAGNKCDLSDIREVPLKDAKEYAESIGALVVETSAKNAINIEELFQGISRQIPPLDPHENGNSGGIKLGNQSLQAGRRCC.

GTP contacts are provided by glycine 16, glycine 18, lysine 19, serine 20, serine 21, aspartate 32, and histidine 33. A Mg(2+)-binding site is contributed by serine 20. 2 consecutive short sequence motifs (switch) follow at residues 30-42 (HFDH…IGAS) and 63-79 (AGQE…YRGS). A Phosphoserine modification is found at serine 36. Residues threonine 38, glycine 64, asparagine 119, aspartate 122, alanine 150, and lysine 151 each coordinate GTP. Mg(2+) is bound at residue threonine 38. 2 S-geranylgeranyl cysteine lipidation sites follow: cysteine 194 and cysteine 195.

The protein belongs to the small GTPase superfamily. Rab family. Interacts (in GDP-bound form) with RIN3 and GAPVD1, which function as guanine exchange factors (GEF). Interacts (in GTP-bound form) with EEA1. Interacts with NGFR. Interacts with EGFR. Interacts with OCRL. Interacts (in GTP-bound form) with APPL2; interaction contributes to or enhances recruitment of APPL2 to the phagosomes; interaction enhances Fc-gamma receptor-mediated phagocytosis through PI3K/Akt signaling in macrophages. Mg(2+) is required as a cofactor. In terms of tissue distribution, detected in brain astrocytes, spleen and intestine (at protein level).

Its subcellular location is the early endosome. It is found in the golgi apparatus. The protein localises to the trans-Golgi network. It localises to the trans-Golgi network membrane. The protein resides in the cytoplasmic vesicle. Its subcellular location is the phagosome. It is found in the phagosome membrane. The catalysed reaction is GTP + H2O = GDP + phosphate + H(+). Regulated by guanine nucleotide exchange factors (GEFs) including RIN3 and GAPVD1 which promote the exchange of bound GDP for free GTP. Regulated by GTPase activating proteins (GAPs) which increase the GTP hydrolysis activity. Inhibited by GDP dissociation inhibitors (GDIs) which prevent Rab-GDP dissociation. The small GTPases Rab are key regulators of intracellular membrane trafficking, from the formation of transport vesicles to their fusion with membranes. Rabs cycle between an inactive GDP-bound form and an active GTP-bound form that is able to recruit to membranes different set of downstream effectors directly responsible for vesicle formation, movement, tethering and fusion. Required for the integrity and for normal function of the Golgi apparatus and the trans-Golgi network. Plays a role in insulin-stimulated translocation of GLUT4 to the cell membrane. Plays a role in the maturation of phagosomes that engulf pathogens, such as S.aureus and Mycobacterium. Plays a role in M6PR transport from the trans-Golgi network to endosomes. Plays a role in the internalization of EGFR from the cell membrane into endosomes. This Rattus norvegicus (Rat) protein is Ras-related protein Rab-31.